A 276-amino-acid polypeptide reads, in one-letter code: 3beta-hydroxysteroid dehydrogenase (276 aa).

Residues 70–71 (DV), Asn-97, Tyr-162, and Lys-166 each bind NADP(+). Residue Tyr-162 is the Proton acceptor of the active site.

This sequence belongs to the short-chain dehydrogenases/reductases (SDR) family.

It catalyses the reaction 3-oxo-5beta-cholan-24-oate + NADPH + H(+) = isolithocholate + NADP(+). It carries out the reaction 12alpha-hydroxy-3-oxo-5beta-cholan-24-oate + NADPH + H(+) = isodeoxycholate + NADP(+). The enzyme catalyses 12alpha-hydroxy-3-oxo-5beta-cholan-24-oate + NADH + H(+) = isodeoxycholate + NAD(+). The catalysed reaction is 7alpha,12alpha-dihydroxy-3-oxo-5beta-cholan-24-oate + NADPH + H(+) = isocholate + NADP(+). It catalyses the reaction 3-oxochenodeoxycholate + NADPH + H(+) = isochenodeoxycholate + NADP(+). Involved in the modification of secondary bile acids into iso-bile acids (3beta-bile acids) via epimerization of the 3-OH group through a 3-oxo-intermediate. Catalyzes the reduction of 12-alpha-hydroxy-3-oxo-5-beta-cholan-24-oate (3-oxo-DCA) and 3-oxo-5-beta-cholan-24-oate (3-oxo-LCA) to yield isodeoxycholate (isoDCA) and isolithocholate (isoLCA), respectively. Is also able to catalyze the reduction of 3-dehydrocholate (3-oxo-CA or 7alpha,12alpha-dihydroxy-3-oxo-5beta-cholan-24-oate) and 7-alpha-hydroxy-3-oxo-5-beta-cholan-24-oate (3-oxo-CDCA), into isocholate (isoCA) and isochenodeoxycholate (isoCDCA), respectively. Accepts both NADPH and NADH as cosubstrates. The conversion of the abundant bile acid deoxycholate (DCA) into isoDCA by the gut bacterium R.gnavus favors the growth of the keystone commensal genus Bacteroides, since isoDCA is less cytotoxic than its parent compound, DCA; iso-bile acids have thus a potential role in modulating gut community composition. The polypeptide is 3beta-hydroxysteroid dehydrogenase (Mediterraneibacter gnavus (strain ATCC 29149 / DSM 114966 / JCM 6515 / VPI C7-9) (Ruminococcus gnavus)).